Reading from the N-terminus, the 268-residue chain is Chymotrypsin-C (268 aa).

The first 16 residues, 1–16 (MLGITVLAAILACASS), serve as a signal peptide directing secretion. The propeptide at 17 to 29 (CGDPTFPPNLSAR) is activation peptide. 5 cysteine pairs are disulfide-bonded: C17-C141, C59-C75, C155-C222, C186-C202, and C212-C243. An N-linked (GlcNAc...) asparagine glycan is attached at N25. The Peptidase S1 domain occupies 30 to 267 (VVGGEDAVPN…YIDWIKEKIQ (238 aa)). Catalysis depends on H74, which acts as the Charge relay system. N-linked (GlcNAc...) asparagine glycans are attached at residues N79 and N90. D121 acts as the Charge relay system in catalysis. N-linked (GlcNAc...) asparagine glycosylation is present at N182. S216 (charge relay system) is an active-site residue.

This sequence belongs to the peptidase S1 family. Elastase subfamily.

It carries out the reaction Preferential cleavage: Leu-|-Xaa, Tyr-|-Xaa, Phe-|-Xaa, Met-|-Xaa, Trp-|-Xaa, Gln-|-Xaa, Asn-|-Xaa.. Regulates activation and degradation of trypsinogens and procarboxypeptidases by targeting specific cleavage sites within their zymogen precursors. Has chymotrypsin-type protease activity and hypocalcemic activity. Cleaves TRY4 and TRY5 and thereby inhibits their autoactivation. This Mus musculus (Mouse) protein is Chymotrypsin-C (Ctrc).